The following is a 585-amino-acid chain: Arginine--tRNA ligase (585 aa).

The short motif at 131–141 is the 'HIGH' region element; the sequence is ANPTGPMHVGH.

This sequence belongs to the class-I aminoacyl-tRNA synthetase family. Monomer.

Its subcellular location is the cytoplasm. The enzyme catalyses tRNA(Arg) + L-arginine + ATP = L-arginyl-tRNA(Arg) + AMP + diphosphate. This Rhizobium meliloti (strain 1021) (Ensifer meliloti) protein is Arginine--tRNA ligase.